We begin with the raw amino-acid sequence, 63 residues long: MNFVRILSFVFALVLALGAVSAAPEPRWKLFKKIEKVGRNVRDGLIKAGPAIAVIGQAKSLGK.

The N-terminal stretch at 1-22 is a signal peptide; it reads MNFVRILSFVFALVLALGAVSA. Positions 23-26 are excised as a propeptide; that stretch reads APEP. Position 61 is a leucine amide (Leu61).

It belongs to the cecropin family. As to expression, highest expression in fat body and hemocytes. Is also expressed in Malpighian tubules and to a much lesser extent in midgut. Not present in silk gland.

The protein resides in the secreted. In terms of biological role, cecropins have lytic and antibacterial activity against several Gram-positive and Gram-negative bacteria. The sequence is that of Cecropin-A (CECA) from Bombyx mori (Silk moth).